Reading from the N-terminus, the 291-residue chain is Ribosomal RNA small subunit methyltransferase I (291 aa).

It belongs to the methyltransferase superfamily. RsmI family.

It is found in the cytoplasm. It carries out the reaction cytidine(1402) in 16S rRNA + S-adenosyl-L-methionine = 2'-O-methylcytidine(1402) in 16S rRNA + S-adenosyl-L-homocysteine + H(+). Its function is as follows. Catalyzes the 2'-O-methylation of the ribose of cytidine 1402 (C1402) in 16S rRNA. The chain is Ribosomal RNA small subunit methyltransferase I from Neisseria meningitidis serogroup A / serotype 4A (strain DSM 15465 / Z2491).